The sequence spans 231 residues: 2-C-methyl-D-erythritol 4-phosphate cytidylyltransferase (231 aa).

This sequence belongs to the IspD/TarI cytidylyltransferase family. IspD subfamily.

It carries out the reaction 2-C-methyl-D-erythritol 4-phosphate + CTP + H(+) = 4-CDP-2-C-methyl-D-erythritol + diphosphate. It functions in the pathway isoprenoid biosynthesis; isopentenyl diphosphate biosynthesis via DXP pathway; isopentenyl diphosphate from 1-deoxy-D-xylulose 5-phosphate: step 2/6. Its function is as follows. Catalyzes the formation of 4-diphosphocytidyl-2-C-methyl-D-erythritol from CTP and 2-C-methyl-D-erythritol 4-phosphate (MEP). This Pseudoalteromonas atlantica (strain T6c / ATCC BAA-1087) protein is 2-C-methyl-D-erythritol 4-phosphate cytidylyltransferase.